An 818-amino-acid polypeptide reads, in one-letter code: Structure-specific endonuclease subunit SLX4 (818 aa).

Disordered regions lie at residues 1–39, 53–151, 279–324, 413–437, and 587–712; these read MSFLNSSRRRTRSPSPGQIFAPSATPIVIDSSPSVPSAS, RDPY…SSSN, FSEG…HQDS, NAQFPRKNSRPQKTRSPCSNPKTSK, and MLPA…MASE. The span at 28-39 shows a compositional bias: low complexity; the sequence is VIDSSPSVPSAS. The segment covering 90-103 has biased composition (basic and acidic residues); the sequence is PSERTKDAHGKDRF. Positions 306-316 are enriched in low complexity; it reads TTSTTITSLST. The span at 426-437 shows a compositional bias: polar residues; that stretch reads TRSPCSNPKTSK. Residues 604-618 are compositionally biased toward basic and acidic residues; it reads QMSKRDTIKSRDIRA. 3 stretches are compositionally biased toward polar residues: residues 621–640, 652–672, and 696–712; these read SRSNSNHIPGLVSSTSQNTG, SSKSNDIGTTQGSPLLTTQSV, and SLASNTPSSSTRTMASE.

The protein belongs to the SLX4 family. Forms a heterodimer with SLX1. Post-translationally, phosphorylated in response to DNA damage.

The protein localises to the nucleus. Functionally, regulatory subunit of the SLX1-SLX4 structure-specific endonuclease that resolves DNA secondary structures generated during DNA repair and recombination. Has endonuclease activity towards branched DNA substrates, introducing single-strand cuts in duplex DNA close to junctions with ss-DNA. The protein is Structure-specific endonuclease subunit SLX4 of Uncinocarpus reesii (strain UAMH 1704).